We begin with the raw amino-acid sequence, 418 residues long: Tyrosine--tRNA ligase 1 (418 aa).

Tyrosine 34 is a binding site for L-tyrosine. The 'HIGH' region motif lies at 39–48 (PTADSLHLGH). L-tyrosine is bound by residues tyrosine 169 and glutamine 173. The short motif at 229–233 (KFGKS) is the 'KMSKS' region element. Residue lysine 232 participates in ATP binding. The 67-residue stretch at 352–418 (LNIVELLVNA…GKKKNFVLTY (67 aa)) folds into the S4 RNA-binding domain.

The protein belongs to the class-I aminoacyl-tRNA synthetase family. TyrS type 1 subfamily. Homodimer.

The protein localises to the cytoplasm. It carries out the reaction tRNA(Tyr) + L-tyrosine + ATP = L-tyrosyl-tRNA(Tyr) + AMP + diphosphate + H(+). Functionally, catalyzes the attachment of tyrosine to tRNA(Tyr) in a two-step reaction: tyrosine is first activated by ATP to form Tyr-AMP and then transferred to the acceptor end of tRNA(Tyr). The sequence is that of Tyrosine--tRNA ligase 1 from Streptococcus thermophilus (strain CNRZ 1066).